A 1041-amino-acid polypeptide reads, in one-letter code: MNKLLLHLVRVISILGLANALTQTQPILKDIQITDSYTKTKECTDPDHWFIIEGQLSIPKGSQQNITFQVPDAFSSFPQEPFSIKHNSNSVATISRPDKSTNNFTISIPEKSSEDITTTFNFLAQLTSDAKSKVTEPKSIVYSFYSENTMFNDVIDYVAKNTSAITTDGGIYKTNNTAWFTVDLPMRTFRNPVYLTSQTSSSSDYVFDTSLTKFEVVTAVDSFNEPINAIPYTTVHDYSTEDEIRCLFNSTISGGLYFRVTYFTKKLSTSSISNTVELTYPDEGTSVRLLGKRDTSTTLASELYSESAANIDSTTSDDTTSSDAAITPTYSNSTLSSYTSQSSAIPEVAVTASLSSGILSSTVDGASTSADASMSAVSTVSSSSEQASSSSISLSAPSSSNSTFTTPSSSLSATETYSIISSASISVTQASYIDNSTTTAVTQSTSTIAVSSAEKLSSTLSYTSNVTISVSSATQHTTTPSYVSNSTTLSSSSVLESVISSPYLANTTVSGASSASQSTNPPYVSNSTTSSATQLATIAPFAINITGTSISSSITNTSSVSSTTSSLSSGPFVSNTTVASGSYILTTTTESAQLTEIGSLIPISTITTSTTTSGTDKTGSNKVASSTEIAQSIVNNSSLSVSTINTNAATAAANARNATFTHATHSGSLQPSYHSSSLLSSTIDTKVTTATTSTSRDGSSSLAFTTGLNQSVVTGTDKSDTYSVISSTESAQVTEYDSLLPISTLKPTVVTGTSRNSTFSMVSSTKLTEATATDKGDAYSVISSTQSAQVTEYGSMLPISTLETPTVIMSTDESGYFTLTTCTESGQATEYGSLIPISTLDGSVIYTFTGESVVVGYSTTVGAAQYAQHTSLVPVSTIKGSKTSLSTEESVVAGYSTTVGAAQYAQHTSLVPVSTIKGSKTSLSTEESVVAGYSTTVDSAQYAEHTNLVAIDTLKTSTFQKATATEVCVTCTALSSPHSATLDAGTTISLPTSSSTSLSTIITWYSSSTIKPPSISTYSGAAGQLTIRIGSLLLGLISFLL.

An N-terminal signal peptide occupies residues 1–20; it reads MNKLLLHLVRVISILGLANA. Asn-65, Asn-103, Asn-161, Asn-175, Asn-249, Asn-332, Asn-401, Asn-435, Asn-465, Asn-485, Asn-506, Asn-526, Asn-544, and Asn-556 each carry an N-linked (GlcNAc...) asparagine glycan. The segment at 388 to 410 is disordered; sequence SSSSISLSAPSSSNSTFTTPSSS. Repeat 1 spans residues 457–492; that stretch reads SSTLSYTSNVTISVSSATQHTTTPSYVSNSTTLSSS. The segment at 457–962 is 9 X approximate repeats; it reads SSTLSYTSNV…TLKTSTFQKA (506 aa). 2 consecutive repeat copies span residues 577 to 606 and 613 to 647. Residues Asn-635, Asn-636, Asn-657, and Asn-709 are each glycosylated (N-linked (GlcNAc...) asparagine). Repeat unit 4 spans residues 716–745; it reads TDKSDTYSVISSTESAQVTEYDSLLPISTL. An N-linked (GlcNAc...) asparagine glycan is attached at Asn-756. Repeat copies occupy residues 773–802, 811–840, 849–886, 887–924, and 925–962. Gly-1020 carries the GPI-anchor amidated glycine lipid modification. Residues 1021–1041 constitute a propeptide, removed in mature form; it reads AAGQLTIRIGSLLLGLISFLL.

Post-translationally, the GPI-anchor is attached to the protein in the endoplasmic reticulum and serves to target the protein to the cell surface. There, the glucosamine-inositol phospholipid moiety is cleaved off and the GPI-modified mannoprotein is covalently attached via its lipidless GPI glycan remnant to the 1,6-beta-glucan of the outer cell wall layer.

It localises to the secreted. It is found in the cell wall. Its subcellular location is the membrane. In terms of biological role, seems to be involved in the correct timing of cell separation after cytokinesis, as separation of mutant daughter cells is delayed. Could either be an enzyme necessary for glucans-degradation of the cell wall at the neck region between mother and daughter cells or a regulatory protein controlling this metabolic step. The polypeptide is Protein EGT2 (EGT2) (Saccharomyces cerevisiae (strain ATCC 204508 / S288c) (Baker's yeast)).